The chain runs to 289 residues: Eukaryotic translation initiation factor 3 subunit F (289 aa).

Residues 7-137 (VKVHPVVLFQ…LRAYVCVPLG (131 aa)) form the MPN domain.

Belongs to the eIF-3 subunit F family. As to quaternary structure, component of the eukaryotic translation initiation factor 3 (eIF-3) complex.

The protein resides in the cytoplasm. Its function is as follows. Component of the eukaryotic translation initiation factor 3 (eIF-3) complex, which is involved in protein synthesis of a specialized repertoire of mRNAs and, together with other initiation factors, stimulates binding of mRNA and methionyl-tRNAi to the 40S ribosome. The eIF-3 complex specifically targets and initiates translation of a subset of mRNAs involved in cell proliferation. The polypeptide is Eukaryotic translation initiation factor 3 subunit F (Bombyx mori (Silk moth)).